We begin with the raw amino-acid sequence, 578 residues long: Isocitrate dehydrogenase kinase/phosphatase (578 aa).

ATP is bound by residues 315 to 321 and Lys336; that span reads APGIRGM. Residue Asp371 is part of the active site.

It belongs to the AceK family.

It is found in the cytoplasm. It catalyses the reaction L-seryl-[isocitrate dehydrogenase] + ATP = O-phospho-L-seryl-[isocitrate dehydrogenase] + ADP + H(+). In terms of biological role, bifunctional enzyme which can phosphorylate or dephosphorylate isocitrate dehydrogenase (IDH) on a specific serine residue. This is a regulatory mechanism which enables bacteria to bypass the Krebs cycle via the glyoxylate shunt in response to the source of carbon. When bacteria are grown on glucose, IDH is fully active and unphosphorylated, but when grown on acetate or ethanol, the activity of IDH declines drastically concomitant with its phosphorylation. The sequence is that of Isocitrate dehydrogenase kinase/phosphatase from Escherichia coli O157:H7.